Consider the following 158-residue polypeptide: NADH-quinone oxidoreductase subunit B (158 aa).

The [4Fe-4S] cluster site is built by C37, C38, C102, and C132.

It belongs to the complex I 20 kDa subunit family. NDH-1 is composed of 14 different subunits. Subunits NuoB, C, D, E, F, and G constitute the peripheral sector of the complex. [4Fe-4S] cluster serves as cofactor.

The protein resides in the cell inner membrane. The catalysed reaction is a quinone + NADH + 5 H(+)(in) = a quinol + NAD(+) + 4 H(+)(out). Functionally, NDH-1 shuttles electrons from NADH, via FMN and iron-sulfur (Fe-S) centers, to quinones in the respiratory chain. The immediate electron acceptor for the enzyme in this species is believed to be ubiquinone. Couples the redox reaction to proton translocation (for every two electrons transferred, four hydrogen ions are translocated across the cytoplasmic membrane), and thus conserves the redox energy in a proton gradient. This Acidithiobacillus ferrooxidans (strain ATCC 23270 / DSM 14882 / CIP 104768 / NCIMB 8455) (Ferrobacillus ferrooxidans (strain ATCC 23270)) protein is NADH-quinone oxidoreductase subunit B.